The sequence spans 662 residues: DNA ligase (662 aa).

Residues 31–35 (DYEYD), 80–81 (SL), and Glu109 contribute to the NAD(+) site. The active-site N6-AMP-lysine intermediate is Lys111. 4 residues coordinate NAD(+): Arg132, Glu166, Lys282, and Lys306. Residues Cys400, Cys403, Cys418, and Cys423 each contribute to the Zn(2+) site. The BRCT domain maps to 581 to 662 (KVNNIFEGKT…FEEMLKGENI (82 aa)).

It belongs to the NAD-dependent DNA ligase family. LigA subfamily. Mg(2+) is required as a cofactor. Mn(2+) serves as cofactor.

It carries out the reaction NAD(+) + (deoxyribonucleotide)n-3'-hydroxyl + 5'-phospho-(deoxyribonucleotide)m = (deoxyribonucleotide)n+m + AMP + beta-nicotinamide D-nucleotide.. Its function is as follows. DNA ligase that catalyzes the formation of phosphodiester linkages between 5'-phosphoryl and 3'-hydroxyl groups in double-stranded DNA using NAD as a coenzyme and as the energy source for the reaction. It is essential for DNA replication and repair of damaged DNA. This chain is DNA ligase, found in Thermoanaerobacter pseudethanolicus (strain ATCC 33223 / 39E) (Clostridium thermohydrosulfuricum).